Reading from the N-terminus, the 327-residue chain is Quinone oxidoreductase 1 (327 aa).

NADP(+) is bound by residues 42 to 46, Tyr130, 152 to 153, 173 to 177, Tyr192, Ser216, 238 to 241, 264 to 266, and Arg317; these read FIDTY, GV, GTAQK, FGNS, and PSL.

Belongs to the zinc-containing alcohol dehydrogenase family. Quinone oxidoreductase subfamily. Homodimer.

It catalyses the reaction 2 a quinone + NADPH + H(+) = 2 a 1,4-benzosemiquinone + NADP(+). The polypeptide is Quinone oxidoreductase 1 (qorA) (Escherichia coli (strain K12)).